Consider the following 218-residue polypeptide: Protein-methionine-sulfoxide reductase heme-binding subunit MsrQ (218 aa).

A run of 5 helical transmembrane segments spans residues 14–34, 60–80, 86–106, 121–141, and 155–175; these read LVHA…WQVW, LLLI…AVVI, LGLY…TLDL, PYIT…ITST, and LHML…WLVK.

Belongs to the MsrQ family. As to quaternary structure, heterodimer of a catalytic subunit (MsrP) and a heme-binding subunit (MsrQ). The cofactor is FMN. Requires heme b as cofactor.

The protein resides in the cell inner membrane. Functionally, part of the MsrPQ system that repairs oxidized periplasmic proteins containing methionine sulfoxide residues (Met-O), using respiratory chain electrons. Thus protects these proteins from oxidative-stress damage caused by reactive species of oxygen and chlorine generated by the host defense mechanisms. MsrPQ is essential for the maintenance of envelope integrity under bleach stress, rescuing a wide series of structurally unrelated periplasmic proteins from methionine oxidation. MsrQ provides electrons for reduction to the reductase catalytic subunit MsrP, using the quinone pool of the respiratory chain. The chain is Protein-methionine-sulfoxide reductase heme-binding subunit MsrQ from Xanthomonas axonopodis pv. citri (strain 306).